The chain runs to 470 residues: UDP-N-acetylmuramoylalanine--D-glutamate ligase (470 aa).

124–130 contributes to the ATP binding site; it reads GTNGKTT.

It belongs to the MurCDEF family.

It localises to the cytoplasm. The catalysed reaction is UDP-N-acetyl-alpha-D-muramoyl-L-alanine + D-glutamate + ATP = UDP-N-acetyl-alpha-D-muramoyl-L-alanyl-D-glutamate + ADP + phosphate + H(+). It participates in cell wall biogenesis; peptidoglycan biosynthesis. Functionally, cell wall formation. Catalyzes the addition of glutamate to the nucleotide precursor UDP-N-acetylmuramoyl-L-alanine (UMA). The chain is UDP-N-acetylmuramoylalanine--D-glutamate ligase from Prochlorococcus marinus (strain SARG / CCMP1375 / SS120).